Reading from the N-terminus, the 682-residue chain is K(+)-insensitive pyrophosphate-energized proton pump 2 (682 aa).

Helical transmembrane passes span 1 to 21 (MELF…ALYM), 56 to 76 (TIAG…RQYH), 78 to 98 (AVAF…GMYV), 130 to 150 (LAVT…FGGA), and 160 to 180 (IVGF…SGGI). Residue Lys183 participates in substrate binding. Mg(2+) is bound by residues Asp186, Asp190, and Asp216. The next 7 membrane-spanning stretches (helical) occupy residues 237-257 (IGAM…GIVF), 258-278 (PLVA…FVRA), 291-311 (GYIV…RYML), 318-338 (FIYF…FVLI), 353-373 (IARA…AVGF), 375-395 (STAL…WLGL), and 404-424 (LYGT…ILAM). Asp432 contributes to the Mg(2+) binding site. The next 4 membrane-spanning stretches (helical) occupy residues 468–488 (YAIG…IDEV), 506–526 (EVFV…STAI), 574–594 (MVLP…VLKA), and 595–615 (EAAA…ALFL). Ca(2+) is bound by residues Asp623, Asp649, and Asp653. Lys656 contacts substrate. A helical membrane pass occupies residues 662-682 (SLHVLVKLISTITLVLAGLFI).

The protein belongs to the H(+)-translocating pyrophosphatase (TC 3.A.10) family. K(+)-insensitive subfamily. Homodimer. Requires Mg(2+) as cofactor.

The protein resides in the cell membrane. The enzyme catalyses diphosphate + H2O + H(+)(in) = 2 phosphate + 2 H(+)(out). Proton pump that utilizes the energy of pyrophosphate hydrolysis as the driving force for proton movement across the membrane. Generates a proton motive force. This chain is K(+)-insensitive pyrophosphate-energized proton pump 2, found in Moorella thermoacetica (strain ATCC 39073 / JCM 9320).